The primary structure comprises 244 residues: 14-3-3 protein beta/alpha (244 aa).

M1 is subject to N-acetylmethionine. Phosphoserine is present on S184.

This sequence belongs to the 14-3-3 family. Homodimer, and heterodimer with other family members. Phosphorylated.

The protein localises to the cytoplasm. Its function is as follows. Adapter protein implicated in the regulation of a large spectrum of both general and specialized signaling pathways. Binds to a large number of partners, usually by recognition of a phosphoserine or phosphothreonine motif. Binding generally results in the modulation of the activity of the binding partner. This Gallus gallus (Chicken) protein is 14-3-3 protein beta/alpha (YWHAB).